The following is a 181-amino-acid chain: Large ribosomal subunit protein uL5 (181 aa).

Belongs to the universal ribosomal protein uL5 family. In terms of assembly, part of the 50S ribosomal subunit; part of the 5S rRNA/L5/L18/L25 subcomplex. Contacts the 5S rRNA and the P site tRNA. Forms a bridge to the 30S subunit in the 70S ribosome.

Its function is as follows. This is one of the proteins that bind and probably mediate the attachment of the 5S RNA into the large ribosomal subunit, where it forms part of the central protuberance. In the 70S ribosome it contacts protein S13 of the 30S subunit (bridge B1b), connecting the 2 subunits; this bridge is implicated in subunit movement. Contacts the P site tRNA; the 5S rRNA and some of its associated proteins might help stabilize positioning of ribosome-bound tRNAs. The polypeptide is Large ribosomal subunit protein uL5 (Colwellia psychrerythraea (strain 34H / ATCC BAA-681) (Vibrio psychroerythus)).